Consider the following 278-residue polypeptide: Potassium/proton antiporter CemA (278 aa).

The next 4 helical transmembrane spans lie at Ile-61–Gly-81, Ala-155–Thr-175, Ile-203–Ile-223, and Phe-238–Ile-258.

It belongs to the CemA family.

It localises to the plastid. The protein resides in the chloroplast inner membrane. The catalysed reaction is K(+)(in) + H(+)(out) = K(+)(out) + H(+)(in). Contributes to K(+)/H(+) antiport activity by supporting proton efflux to control proton extrusion and homeostasis in chloroplasts in a light-dependent manner to modulate photosynthesis. Prevents excessive induction of non-photochemical quenching (NPQ) under continuous-light conditions. Indirectly promotes efficient inorganic carbon uptake into chloroplasts. This Pyropia yezoensis (Susabi-nori) protein is Potassium/proton antiporter CemA.